A 154-amino-acid chain; its full sequence is SsrA-binding protein (154 aa).

This sequence belongs to the SmpB family.

Its subcellular location is the cytoplasm. Functionally, required for rescue of stalled ribosomes mediated by trans-translation. Binds to transfer-messenger RNA (tmRNA), required for stable association of tmRNA with ribosomes. tmRNA and SmpB together mimic tRNA shape, replacing the anticodon stem-loop with SmpB. tmRNA is encoded by the ssrA gene; the 2 termini fold to resemble tRNA(Ala) and it encodes a 'tag peptide', a short internal open reading frame. During trans-translation Ala-aminoacylated tmRNA acts like a tRNA, entering the A-site of stalled ribosomes, displacing the stalled mRNA. The ribosome then switches to translate the ORF on the tmRNA; the nascent peptide is terminated with the 'tag peptide' encoded by the tmRNA and targeted for degradation. The ribosome is freed to recommence translation, which seems to be the essential function of trans-translation. The sequence is that of SsrA-binding protein from Enterococcus faecalis (strain ATCC 700802 / V583).